The sequence spans 216 residues: Thymidylate kinase (216 aa).

10–17 (GIDGCGKT) contributes to the ATP binding site.

Belongs to the thymidylate kinase family.

It catalyses the reaction dTMP + ATP = dTDP + ADP. In terms of biological role, phosphorylation of dTMP to form dTDP in both de novo and salvage pathways of dTTP synthesis. The polypeptide is Thymidylate kinase (Prochlorococcus marinus (strain MIT 9303)).